A 629-amino-acid polypeptide reads, in one-letter code: tRNA uridine 5-carboxymethylaminomethyl modification enzyme MnmG (629 aa).

FAD is bound by residues 13 to 18 (GGGHAG), valine 125, and serine 180. Residue 273–287 (GPRYCPSIEDKIHRF) participates in NAD(+) binding. Glutamine 370 is a binding site for FAD.

The protein belongs to the MnmG family. As to quaternary structure, homodimer. Heterotetramer of two MnmE and two MnmG subunits. Requires FAD as cofactor.

It is found in the cytoplasm. NAD-binding protein involved in the addition of a carboxymethylaminomethyl (cmnm) group at the wobble position (U34) of certain tRNAs, forming tRNA-cmnm(5)s(2)U34. In Shewanella oneidensis (strain ATCC 700550 / JCM 31522 / CIP 106686 / LMG 19005 / NCIMB 14063 / MR-1), this protein is tRNA uridine 5-carboxymethylaminomethyl modification enzyme MnmG.